The sequence spans 191 residues: Inosine triphosphate pyrophosphatase (191 aa).

ITP is bound at residue 9–14 (TGNAKK). Glutamate 39 is a Mg(2+) binding site. ITP-binding positions include lysine 51, 67–68 (DT), lysine 84, 143–146 (FGWD), lysine 166, and 171–172 (HR).

The protein belongs to the HAM1 NTPase family. As to quaternary structure, homodimer. Mg(2+) serves as cofactor. It depends on Mn(2+) as a cofactor.

The protein resides in the cytoplasm. The enzyme catalyses ITP + H2O = IMP + diphosphate + H(+). The catalysed reaction is dITP + H2O = dIMP + diphosphate + H(+). It catalyses the reaction XTP + H2O = XMP + diphosphate + H(+). Its function is as follows. Pyrophosphatase that hydrolyzes non-canonical purine nucleotides such as inosine triphosphate (ITP), deoxyinosine triphosphate (dITP) or xanthosine 5'-triphosphate (XTP) to their respective monophosphate derivatives. The enzyme does not distinguish between the deoxy- and ribose forms. Probably excludes non-canonical purines from RNA and DNA precursor pools, thus preventing their incorporation into RNA and DNA and avoiding chromosomal lesions. The protein is Inosine triphosphate pyrophosphatase of Drosophila melanogaster (Fruit fly).